A 239-amino-acid polypeptide reads, in one-letter code: 1-(5-phosphoribosyl)-5-[(5-phosphoribosylamino)methylideneamino] imidazole-4-carboxamide isomerase (239 aa).

The active-site Proton acceptor is aspartate 8. The active-site Proton donor is the aspartate 129.

This sequence belongs to the HisA/HisF family.

It localises to the cytoplasm. It carries out the reaction 1-(5-phospho-beta-D-ribosyl)-5-[(5-phospho-beta-D-ribosylamino)methylideneamino]imidazole-4-carboxamide = 5-[(5-phospho-1-deoxy-D-ribulos-1-ylimino)methylamino]-1-(5-phospho-beta-D-ribosyl)imidazole-4-carboxamide. It participates in amino-acid biosynthesis; L-histidine biosynthesis; L-histidine from 5-phospho-alpha-D-ribose 1-diphosphate: step 4/9. This chain is 1-(5-phosphoribosyl)-5-[(5-phosphoribosylamino)methylideneamino] imidazole-4-carboxamide isomerase, found in Cereibacter sphaeroides (strain ATCC 17025 / ATH 2.4.3) (Rhodobacter sphaeroides).